Consider the following 178-residue polypeptide: Ribosome maturation factor RimM (178 aa).

The 80-residue stretch at 99–178 folds into the PRC barrel domain; it reads EGDFYWHDLI…TIEVDWDAGF (80 aa).

The protein belongs to the RimM family. As to quaternary structure, binds ribosomal protein uS19.

The protein resides in the cytoplasm. Its function is as follows. An accessory protein needed during the final step in the assembly of 30S ribosomal subunit, possibly for assembly of the head region. Essential for efficient processing of 16S rRNA. May be needed both before and after RbfA during the maturation of 16S rRNA. It has affinity for free ribosomal 30S subunits but not for 70S ribosomes. This chain is Ribosome maturation factor RimM, found in Mannheimia succiniciproducens (strain KCTC 0769BP / MBEL55E).